The sequence spans 449 residues: GTP-binding protein A (449 aa).

The disordered stretch occupies residues 1 to 77; that stretch reads MFNINPYKSK…LSSKTENSLS (77 aa). Composition is skewed to low complexity over residues 8–46 and 67–77; these read KSKT…SSSS and SLSSKTENSLS. Positions 149–386 constitute an AIG1-type G domain; it reads QNECNVLLLG…FMGHLRAKNK (238 aa). The segment at 158-165 is G1; sequence GRTGVGKS. Position 158–165 (158–165) interacts with GTP; it reads GRTGVGKS. The G2 stretch occupies residues 183-187; the sequence is SCTQD. A G3 region spans residues 204-207; sequence DTPG. The tract at residues 275 to 278 is G4; the sequence is TYAN. The G5 stretch occupies residues 336–338; it reads ENS.

This sequence belongs to the TRAFAC class TrmE-Era-EngA-EngB-Septin-like GTPase superfamily. AIG1/Toc34/Toc159-like paraseptin GTPase family. IAN subfamily.

This chain is GTP-binding protein A (gtpA), found in Dictyostelium discoideum (Social amoeba).